Consider the following 469-residue polypeptide: Cyclin-dependent kinase 14 (469 aa).

Serine 24, serine 78, and serine 95 each carry phosphoserine. Positions 103-133 are disordered; that stretch reads FKTSSTGKESPKVRRHSSPSSPTSPKFGKAD. Residue serine 134 is modified to Phosphoserine. Positions 135–419 constitute a Protein kinase domain; the sequence is YEKLEKLGEG…AQAALSHEYF (285 aa). Residues 141–149 and lysine 164 contribute to the ATP site; that span reads LGEGSYATV. Aspartate 256 serves as the catalytic Proton acceptor. Positions 449 to 469 are disordered; sequence ESMRAFGKNNSYGKSLSNSKH. Residues 456–469 show a composition bias toward polar residues; sequence KNNSYGKSLSNSKH.

Belongs to the protein kinase superfamily. CMGC Ser/Thr protein kinase family. CDC2/CDKX subfamily. In terms of assembly, found in a complex with LRP6, CCNY and CAPRIN2 during G2/M stage; CAPRIN2 functions as a scaffold for the complex by binding to CCNY via its N terminus and to CDK14 via its C terminus. Interacts with CCNY; CCNY mediates its recruitment to the plasma membrane and promotes phosphorylation of LRP6. Interacts with CCDN3 and CDKN1A. Interacts with SEPT8. Interacts with 14-3-3 proteina YWHAB, YWHAE, YWHAH and YWHAQ. As to expression, highly expressed in brain, pancreas, kidney, heart, testis and ovary. Also detected at lower levels in other tissues except in spleen and thymus where expression is barely detected.

The protein resides in the cell membrane. It is found in the cytoplasm. The protein localises to the nucleus. The catalysed reaction is L-seryl-[protein] + ATP = O-phospho-L-seryl-[protein] + ADP + H(+). It carries out the reaction L-threonyl-[protein] + ATP = O-phospho-L-threonyl-[protein] + ADP + H(+). Its activity is regulated as follows. Serine/threonine-protein kinase activity is promoted by associated cyclins CCDN3 and CCNY and repressed by CDKN1A. Serine/threonine-protein kinase involved in the control of the eukaryotic cell cycle, whose activity is controlled by an associated cyclin. Acts as a cell-cycle regulator of Wnt signaling pathway during G2/M phase by mediating the phosphorylation of LRP6 at 'Ser-1490', leading to the activation of the Wnt signaling pathway. Acts as a regulator of cell cycle progression and cell proliferation via its interaction with CCDN3. Phosphorylates RB1 in vitro, however the relevance of such result remains to be confirmed in vivo. May also play a role in meiosis, neuron differentiation and may indirectly act as a negative regulator of insulin-responsive glucose transport. The protein is Cyclin-dependent kinase 14 (CDK14) of Homo sapiens (Human).